We begin with the raw amino-acid sequence, 445 residues long: NAD(P)H coenzyme A polysulfide/persulfide reductase (445 aa).

16–17 provides a ligand contact to FAD; that stretch reads AA. Arg27 contributes to the CoA binding site. FAD-binding positions include 38–39 and 45–47; these read EA and HAP. Residues 44–48, 65–66, and Arg75 each bind CoA; these read SHAPC and YY. Catalysis depends on Cys48, which acts as the Redox-active. FAD-binding residues include Val85, Asp283, and Ala301. Residues Asn305 and Lys361 each contribute to the CoA site. Tyr425 lines the FAD pocket. Trp433 and Arg441 together coordinate CoA.

Belongs to the class-III pyridine nucleotide-disulfide oxidoreductase family. Homodimer. Homotetramer. FAD is required as a cofactor.

It catalyses the reaction NADP(+) + 2 CoA = CoA-disulfide + NADPH + H(+). It carries out the reaction NAD(+) + 2 CoA = CoA-disulfide + NADH + H(+). Catalyzes the NAD(P)H-dependent reduction of polysulfide, CoA-polysulfides, and CoA persulfide, as well as the reduction of a range of other small persulfides, including TNB and glutathione persulfides. The likely in vivo substrates are di-, poly-, and persulfide derivatives of coenzyme A, although polysulfide itself is also efficiently reduced. Shows coenzyme A disulfide reductase (CoADR) activity with both NADH and NADPH, with a preference for NADPH. May also play a role in the reduction of elemental sulfur. The protein is NAD(P)H coenzyme A polysulfide/persulfide reductase of Pyrococcus horikoshii (strain ATCC 700860 / DSM 12428 / JCM 9974 / NBRC 100139 / OT-3).